An 806-amino-acid chain; its full sequence is Leucine--tRNA ligase (806 aa).

The short motif at 54–64 is the 'HIGH' region element; that stretch reads SYPSGDLHMGH. The short motif at 571–575 is the 'KMSKS' region element; that stretch reads KMSKS. Lys-574 is a binding site for ATP.

Belongs to the class-I aminoacyl-tRNA synthetase family.

It localises to the cytoplasm. The catalysed reaction is tRNA(Leu) + L-leucine + ATP = L-leucyl-tRNA(Leu) + AMP + diphosphate. The polypeptide is Leucine--tRNA ligase (Tropheryma whipplei (strain TW08/27) (Whipple's bacillus)).